The primary structure comprises 353 residues: 4-hydroxy-2-oxovalerate aldolase 1 (353 aa).

Residues 14–266 form the Pyruvate carboxyltransferase domain; the sequence is VRMTDTSLRD…KTGIDFFDIA (253 aa). Residue 22–23 coordinates substrate; it reads RD. Asp23 provides a ligand contact to Mn(2+). The Proton acceptor role is filled by His26. Substrate contacts are provided by Ser176 and His205. Residues His205 and His207 each coordinate Mn(2+). A substrate-binding site is contributed by Tyr296.

Belongs to the 4-hydroxy-2-oxovalerate aldolase family.

The enzyme catalyses (S)-4-hydroxy-2-oxopentanoate = acetaldehyde + pyruvate. The chain is 4-hydroxy-2-oxovalerate aldolase 1 from Mycobacterium sp. (strain KMS).